Consider the following 94-residue polypeptide: Large ribosomal subunit protein eL33 (94 aa).

The protein belongs to the eukaryotic ribosomal protein eL33 family.

This Aeropyrum pernix (strain ATCC 700893 / DSM 11879 / JCM 9820 / NBRC 100138 / K1) protein is Large ribosomal subunit protein eL33.